The following is a 528-amino-acid chain: Linear primary-alkylsulfatase (528 aa).

Zn(2+) is bound by residues histidine 42, histidine 44, aspartate 46, histidine 47, glutamate 151, and glutamate 170. Residues 179 to 184 (NVHTLR) and arginine 189 contribute to the sulfate site. Histidine 213 serves as a coordination point for Zn(2+). Tyrosine 275 provides a ligand contact to sulfate.

Belongs to the metallo-beta-lactamase superfamily. Type III sulfatase family. Zn(2+) serves as cofactor.

The catalysed reaction is a primary linear alkyl sulfate ester + H2O = a primary alcohol + sulfate + H(+). In terms of biological role, alkylsulfatase that cleaves the widely used detergent sodium dodecyl sulfate (SDS), which allows the bacterium to use SDS as a sole carbon or sulfur source. This Pseudomonas sp. (strain ATCC 19151) protein is Linear primary-alkylsulfatase.